The chain runs to 351 residues: Type II restriction enzyme NmeDI (351 aa).

It catalyses the reaction Endonucleolytic cleavage of DNA to give specific double-stranded fragments with terminal 5'-phosphates.. In terms of biological role, a P subtype restriction enzyme that recognizes the double-stranded sequence 5'-N(12)RCCGGYN(12)-3' and cleaves on both sides of the recognition sequence. The sequence is that of Type II restriction enzyme NmeDI (nmeDIRP) from Neisseria meningitidis serogroup C.